The primary structure comprises 501 residues: Solute carrier family 2, facilitated glucose transporter member 5 (501 aa).

M1 bears the N-acetylmethionine mark. Over 1 to 18 (MEQQDQSMKEGRLTLVLA) the chain is Cytoplasmic. The helical transmembrane segment at 19-39 (LATLIAAFGSSFQYGYNVAAV) threads the bilayer. Residue Y32 participates in D-fructose binding. Topologically, residues 40–68 (NSPALLMQQFYNETYYGRTGEFMEDFPLT) are extracellular. N-linked (GlcNAc...) asparagine glycosylation is present at N51. Residues 69–91 (LLWSVTVSMFPFGGFIGSLLVGP) form a helical membrane-spanning segment. Over 92–98 (LVNKFGR) the chain is Cytoplasmic. A helical transmembrane segment spans residues 99-119 (KGALLFNNIFSIVPAILMGCS). The Extracellular segment spans residues 120-126 (RVAKSFE). The chain crosses the membrane as a helical span at residues 127-149 (LIIISRLLVGICAGVSSNVVPMY). At 150 to 161 (LGELAPKNLRGA) the chain is on the cytoplasmic side. The helical transmembrane segment at 162–182 (LGVVPQLFITVGILVAQIFGL) threads the bilayer. Q167 provides a ligand contact to D-fructose. The Extracellular portion of the chain corresponds to 183 to 192 (RNLLANVDGW). A helical transmembrane segment spans residues 193–213 (PILLGLTGVPAALQLVLLPFF). Residues 214 to 277 (PESPRYLLIQ…LFRMRSLRWQ (64 aa)) are Cytoplasmic-facing. A helical transmembrane segment spans residues 278–298 (LLSIIVLMGGQQLSGVNAIYY). Residues Q288 and 296–298 (IYY) each bind D-fructose. Residues 299 to 313 (YADQIYLSAGVPKEH) are Extracellular-facing. The helical transmembrane segment at 314-334 (VQFVTAGTGAVNVVMTFCAVF) threads the bilayer. Residues 335–342 (VVELLGRR) lie on the Cytoplasmic side of the membrane. A helical transmembrane segment spans residues 343–363 (LLLLLGFSICLVACCVLTAAL). Over 364–371 (ALQDTVSW) the chain is Extracellular. Residues 372–394 (MPYISIVCVISYVIGHALGPSPI) form a helical membrane-spanning segment. Position 387 (H387) interacts with D-fructose. Residues 395-412 (PALLITEIFLQSSRPSAF) lie on the Cytoplasmic side of the membrane. Residues 413–433 (MVGGSVHWLSNFTVGLIFPFI) form a helical membrane-spanning segment. 419–420 (HW) contacts D-fructose. Residues 434 to 439 (QEGLGP) lie on the Extracellular side of the membrane. Residues 440-460 (YSFIVFAVICLLTTIYIFLIV) traverse the membrane as a helical segment. At 461 to 501 (PETKAKTFIEINQIFTKMNKVSEVYPEKEELKELPPVTLEQ) the chain is on the cytoplasmic side.

Belongs to the major facilitator superfamily. Sugar transporter (TC 2.A.1.1) family. Glucose transporter subfamily.

Its subcellular location is the apical cell membrane. The protein resides in the cell membrane. It localises to the sarcolemma. It catalyses the reaction D-fructose(out) = D-fructose(in). Its function is as follows. Functions as a fructose transporter that has only low activity with other monosaccharides. Can mediate the uptake of deoxyglucose, but with low efficiency. Essential for fructose uptake in the small intestine. Plays a role in the regulation of salt uptake and blood pressure in response to dietary fructose. Required for the development of high blood pressure in response to high dietary fructose intake. This chain is Solute carrier family 2, facilitated glucose transporter member 5, found in Pongo abelii (Sumatran orangutan).